Reading from the N-terminus, the 347-residue chain is Ceramide very long chain fatty acid hydroxylase scs7 (347 aa).

Residues 1–156 are Cytoplasmic-facing; sequence MASVTSEKCV…GNFLEPLTKT (156 aa). Residues 157-177 form a helical membrane-spanning segment; sequence PWYMIPLIWVPCVTYGFLYAC. Position 178 (Thr-178) is a topological domain, lumenal. Residues 179 to 199 form a helical membrane-spanning segment; that stretch reads GIPFSVAITFFIIGLFTWTLV. Over 200–238 the chain is Cytoplasmic; that stretch reads EYTMHRFLFHLDEYTPDHPIFLTMHFAFHGCHHFLPADK. Zn(2+) contacts are provided by His-204, His-209, His-228, His-231, and His-232. Residues 239–259 form a helical membrane-spanning segment; that stretch reads YRLVMPPALFLIFATPWYHFI. Residue Gln-260 is a topological domain, lumenal. Residues 261 to 281 form a helical membrane-spanning segment; it reads LVLPHYIGVAGFSGAILGYVF. Residues 282–347 are Cytoplasmic-facing; that stretch reads YDLTHYFLHH…EQGKISTKAK (66 aa). The Zn(2+) site is built by His-286, His-290, His-306, His-309, and His-310.

The protein belongs to the sterol desaturase family. SCS7 subfamily. Zn(2+) serves as cofactor.

Its subcellular location is the endoplasmic reticulum membrane. It functions in the pathway sphingolipid metabolism. Functionally, ceramide hydroxylase involved in the hydroxylation of sphingolipid-associated very long chain fatty acids. Postulated to hydroxylate the very long chain fatty acid of dihydroceramides and phytoceramides at C-2. The polypeptide is Ceramide very long chain fatty acid hydroxylase scs7 (Schizosaccharomyces pombe (strain 972 / ATCC 24843) (Fission yeast)).